A 315-amino-acid polypeptide reads, in one-letter code: PDZ domain-containing protein GIPC2 (315 aa).

Positions 1 to 12 (MPLKLRGKKKAK) are enriched in basic residues. Residues 1–34 (MPLKLRGKKKAKSKETAGLVEGEPTGAGGGSLSA) are disordered. The PDZ domain maps to 117–197 (EVNVYKSEDS…EELFTMKLIE (81 aa)).

It belongs to the GIPC family. Probably interacts with SEMA5A. In terms of tissue distribution, expressed at highest levels in ascending colon and at moderate levels in adult kidney. Expressed at low levels in adult pancreas and at very low levels in adult liver. Expression is down-regulated in several primary tumors, such as kidney, colon and rectal tumors.

It localises to the cytoplasm. This is PDZ domain-containing protein GIPC2 (GIPC2) from Homo sapiens (Human).